An 810-amino-acid chain; its full sequence is Phenylalanine--tRNA ligase beta subunit (810 aa).

The region spanning 39–150 (RSWAAGVVLG…LDLPSGSPVG (112 aa)) is the tRNA-binding domain. A B5 domain is found at 407–495 (RGEAIINLRL…RLYGYDHFCE (89 aa)). Positions 473, 479, 482, and 483 each coordinate Mg(2+). The region spanning 716-809 (SPYPAVARDL…LTKQFAVSLR (94 aa)) is the FDX-ACB domain.

Belongs to the phenylalanyl-tRNA synthetase beta subunit family. Type 1 subfamily. Tetramer of two alpha and two beta subunits. Mg(2+) is required as a cofactor.

Its subcellular location is the cytoplasm. The catalysed reaction is tRNA(Phe) + L-phenylalanine + ATP = L-phenylalanyl-tRNA(Phe) + AMP + diphosphate + H(+). The sequence is that of Phenylalanine--tRNA ligase beta subunit (pheT) from Synechocystis sp. (strain ATCC 27184 / PCC 6803 / Kazusa).